The primary structure comprises 345 residues: Krueppel-like factor 3 (345 aa).

A repressor domain region spans residues 1–74; that stretch reads MLMFDPVPVK…TVNKRSSPPS (74 aa). A Glycyl lysine isopeptide (Lys-Gly) (interchain with G-Cter in SUMO) cross-link involves residue Lys10. The 9aaTAD; inactive motif lies at 60 to 68; that stretch reads EPVDLTVNK. The short motif at 61-65 is the CTBP-binding motif element; it reads PVDLT. The disordered stretch occupies residues 66–112; it reads VNKRSSPPSAGNSPSSLKFPSSHRRASPGLSMPSSSPPIKKYSPPSP. Lys68 is covalently cross-linked (Glycyl lysine isopeptide (Lys-Gly) (interchain with G-Cter in SUMO2)). Low complexity-rich tracts occupy residues 70–81 and 92–108; these read SSPPSAGNSPSS and SPGL…KKYS. Phosphoserine occurs at positions 71, 92, 101, 108, and 111. Residues Lys196 and Lys198 each participate in a glycyl lysine isopeptide (Lys-Gly) (interchain with G-Cter in SUMO2) cross-link. 3 positions are modified to phosphoserine: Ser216, Ser224, and Ser250. C2H2-type zinc fingers lie at residues 260–284, 290–314, and 320–342; these read HRCD…RRTH, YKCT…FRKH, and FQCP…RKRH.

This sequence belongs to the krueppel C2H2-type zinc-finger protein family. In terms of assembly, monomer. Post-translationally, sumoylated with SUMO1. Sumoylation is enhanced by PIAS1, PIAS2alpha and PIAS2beta, and PIAS4, but not by Pc2. Enhances transcriptional repression, but has no effect on DNA binding. Sumoylation on Lys-198 is the major site.

It is found in the nucleus. Functionally, binds to the CACCC box of erythroid cell-expressed genes. May play a role in hematopoiesis. This is Krueppel-like factor 3 (KLF3) from Homo sapiens (Human).